We begin with the raw amino-acid sequence, 199 residues long: Charged multivesicular body protein 1b (199 aa).

The stretch at 26 to 48 forms a coiled coil; the sequence is DKEEKAEKAKIKKAIQKGNMEVA. Positions 132-156 are interaction with IST1; sequence MEDTMSSTTTLTTPQNQVDMLLQEM. The tract at residues 167 to 199 is disordered; it reads ELPQGQTGSVGTSVASAEQDELSQRLARLRDQV. Positions 170 to 182 are enriched in polar residues; it reads QGQTGSVGTSVAS. The interval 174 to 199 is interaction with SPAST; that stretch reads GSVGTSVASAEQDELSQRLARLRDQV. Residues 178 to 199 are a coiled coil; it reads TSVASAEQDELSQRLARLRDQV. An interaction with VPS4A, MITD1 and STAMBP region spans residues 180-196; it reads VASAEQDELSQRLARLR. Positions 180–199 are interaction with VTA1; sequence VASAEQDELSQRLARLRDQV. The interval 183 to 199 is interaction with VPS4B; it reads AEQDELSQRLARLRDQV. An MIT-interacting motif motif is present at residues 186-196; that stretch reads DELSQRLARLR.

This sequence belongs to the SNF7 family. Probable peripherally associated component of the endosomal sorting required for transport complex III (ESCRT-III). ESCRT-III components are thought to multimerize to form a flat lattice on the perimeter membrane of the endosome. Several assembly forms of ESCRT-III may exist that interact and act sequentially. Interacts with CHMP1A. Interacts with VTA1; the interaction probably involves the open conformation of CHMP1B. Interacts with CHMP2A. Interacts with VPS4A; the interaction is direct. Interacts with VPS4B; the interaction is direct. Interacts with SPAST (via MIT domain); the interaction is direct. Interacts with IST1. Interacts with MITD1. Interacts with STAMBP. In terms of tissue distribution, widely expressed. Expressed in pancreas, kidney, skeletal muscle, liver, lung, placenta and brain.

The protein localises to the cytoplasm. It localises to the cytosol. The protein resides in the endosome. Its subcellular location is the late endosome membrane. In terms of biological role, probable peripherally associated component of the endosomal sorting required for transport complex III (ESCRT-III) which is involved in multivesicular bodies (MVBs) formation and sorting of endosomal cargo proteins into MVBs. MVBs contain intraluminal vesicles (ILVs) that are generated by invagination and scission from the limiting membrane of the endosome and mostly are delivered to lysosomes enabling degradation of membrane proteins, such as stimulated growth factor receptors, lysosomal enzymes and lipids. The MVB pathway appears to require the sequential function of ESCRT-O, -I,-II and -III complexes. ESCRT-III proteins mostly dissociate from the invaginating membrane before the ILV is released. The ESCRT machinery also functions in topologically equivalent membrane fission events, such as the terminal stages of cytokinesis and the budding of enveloped viruses (HIV-1 and other lentiviruses). ESCRT-III proteins are believed to mediate the necessary vesicle extrusion and/or membrane fission activities, possibly in conjunction with the AAA ATPase VPS4. Involved in cytokinesis. Involved in recruiting VPS4A and/or VPS4B and SPAST to the midbody of dividing cells. Involved in HIV-1 p6- and p9-dependent virus release. The protein is Charged multivesicular body protein 1b (CHMP1B) of Homo sapiens (Human).